A 320-amino-acid chain; its full sequence is Glutaconate CoA-transferase subunit A (320 aa).

Belongs to the 3-oxoacid CoA-transferase subunit A family. As to quaternary structure, heterooctamer of four A and four B subunits.

The protein resides in the cytoplasm. It catalyses the reaction trans-glutaconate + acetyl-CoA = (2E)-glutaconyl-CoA + acetate. It functions in the pathway amino-acid degradation; L-glutamate degradation via hydroxyglutarate pathway; crotonoyl-CoA from L-glutamate: step 3/5. Its function is as follows. Catalyzes the transfer of the CoA moiety from acetyl-CoA to (R)-2-hydroxyglutarate and related compounds like glutaconate. The protein is Glutaconate CoA-transferase subunit A (gctA) of Acidaminococcus fermentans (strain ATCC 25085 / DSM 20731 / CCUG 9996 / CIP 106432 / VR4).